The following is a 110-amino-acid chain: U1-lycotoxin-Ls1ee (110 aa).

A signal peptide spans 1–20; that stretch reads MKFVLLFGVLLVTLFSYSSA. A propeptide spanning residues 21-44 is cleaved from the precursor; sequence EMLDDFDQADEDELLSLIEKEEAR. Disulfide bonds link Cys47/Cys62, Cys54/Cys71, Cys61/Cys89, and Cys73/Cys87.

It belongs to the neurotoxin 19 (CSTX) family. 03 subfamily. Expressed by the venom gland.

The protein localises to the secreted. The polypeptide is U1-lycotoxin-Ls1ee (Lycosa singoriensis (Wolf spider)).